A 568-amino-acid chain; its full sequence is Sulfate adenylyltransferase (568 aa).

An N-terminal region spans residues 1–162 (MANSPHGGVL…IEAVNKLNHY (162 aa)). The interval 163–388 (DYVALRYSPA…LRESSPPRAT (226 aa)) is catalytic. A sulfate-binding site is contributed by Q190. Residues 190–193 (QTRN) and 284–287 (GRDH) contribute to the ATP site. Catalysis depends on residues T191, R192, and N193. R192 is a sulfate binding site. A sulfate-binding site is contributed by A288. Residue V326 participates in ATP binding. Positions 389-568 (QGFTIFLTGY…LESEGYFDRL (180 aa)) are allosteric regulation domain; adenylyl-sulfate kinase-like. Residues 428–431 (DTVR), R445, 471–472 (IA), and R510 contribute to the 3'-phosphoadenylyl sulfate site.

This sequence in the N-terminal section; belongs to the sulfate adenylyltransferase family. It in the C-terminal section; belongs to the APS kinase family. Homohexamer. Dimer of trimers.

The protein resides in the cytoplasm. It carries out the reaction sulfate + ATP + H(+) = adenosine 5'-phosphosulfate + diphosphate. Its pathway is sulfur metabolism; hydrogen sulfide biosynthesis; sulfite from sulfate: step 1/3. Allosterically inhibited by 3'-phosphoadenosine 5'-phosphosulfate (PAPS). In terms of biological role, catalyzes the first intracellular reaction of sulfate assimilation, forming adenosine-5'-phosphosulfate (APS) from inorganic sulfate and ATP. Plays an important role in sulfate activation as a component of the biosynthesis pathway of sulfur-containing amino acids. The protein is Sulfate adenylyltransferase of Aspergillus terreus.